A 553-amino-acid chain; its full sequence is CTP synthase (553 aa).

Residues 1-277 (MPTEPETDYD…DQYVMEELDI (277 aa)) form an amidoligase domain region. S26 lines the CTP pocket. S26 lines the UTP pocket. Residues 27–32 (GLGKGI) and D84 contribute to the ATP site. Positions 84 and 152 each coordinate Mg(2+). Residues 159–161 (DIE), 198–203 (KTKPTQ), and K234 contribute to the CTP site. UTP-binding positions include 198 to 203 (KTKPTQ) and K234. Positions 307–544 (LVGKYDLEDA…LEAVLGDDPH (238 aa)) constitute a Glutamine amidotransferase type-1 domain. L-glutamine is bound at residue G364. Catalysis depends on C391, which acts as the Nucleophile; for glutamine hydrolysis. Residues 392–395 (LGFQ), E415, and R472 each bind L-glutamine. Active-site residues include H517 and E519.

The protein belongs to the CTP synthase family. As to quaternary structure, homotetramer.

The catalysed reaction is UTP + L-glutamine + ATP + H2O = CTP + L-glutamate + ADP + phosphate + 2 H(+). It carries out the reaction L-glutamine + H2O = L-glutamate + NH4(+). It catalyses the reaction UTP + NH4(+) + ATP = CTP + ADP + phosphate + 2 H(+). The protein operates within pyrimidine metabolism; CTP biosynthesis via de novo pathway; CTP from UDP: step 2/2. Allosterically activated by GTP, when glutamine is the substrate; GTP has no effect on the reaction when ammonia is the substrate. The allosteric effector GTP functions by stabilizing the protein conformation that binds the tetrahedral intermediate(s) formed during glutamine hydrolysis. Inhibited by the product CTP, via allosteric rather than competitive inhibition. Catalyzes the ATP-dependent amination of UTP to CTP with either L-glutamine or ammonia as the source of nitrogen. Regulates intracellular CTP levels through interactions with the four ribonucleotide triphosphates. The sequence is that of CTP synthase from Haloarcula marismortui (strain ATCC 43049 / DSM 3752 / JCM 8966 / VKM B-1809) (Halobacterium marismortui).